Here is a 482-residue protein sequence, read N- to C-terminus: UDP-N-acetylmuramate--L-alanine ligase (482 aa).

129–135 (GTHGKTT) is a binding site for ATP.

This sequence belongs to the MurCDEF family.

It is found in the cytoplasm. The enzyme catalyses UDP-N-acetyl-alpha-D-muramate + L-alanine + ATP = UDP-N-acetyl-alpha-D-muramoyl-L-alanine + ADP + phosphate + H(+). It participates in cell wall biogenesis; peptidoglycan biosynthesis. Functionally, cell wall formation. The chain is UDP-N-acetylmuramate--L-alanine ligase from Acinetobacter baumannii (strain SDF).